Consider the following 20-residue polypeptide: Thylakoid lumenal 18.4 kDa protein (20 aa).

It localises to the plastid. The protein resides in the chloroplast thylakoid lumen. The sequence is that of Thylakoid lumenal 18.4 kDa protein from Spinacia oleracea (Spinach).